We begin with the raw amino-acid sequence, 406 residues long: Synaptic vesicle membrane protein VAT-1 homolog (406 aa).

Positions 1–57 (MSAEREAAEAATVAAATEAGAETGTGAGEGAPSQPPTVEVASDPQPPPAPEASASAS) are disordered. The residue at position 2 (serine 2) is an N-acetylserine. A Phosphoserine modification is found at serine 2. Positions 9 to 22 (EAATVAAATEAGAE) are enriched in low complexity. Phosphoserine is present on residues serine 33 and serine 42.

Belongs to the zinc-containing alcohol dehydrogenase family. Quinone oxidoreductase subfamily.

It is found in the cytoplasm. Its subcellular location is the mitochondrion outer membrane. In terms of biological role, plays a part in calcium-regulated keratinocyte activation in epidermal repair mechanisms. Has no effect on cell proliferation. Possesses ATPase activity. Negatively regulates mitochondrial fusion in cooperation with mitofusin proteins (MFN1-2). In Mus musculus (Mouse), this protein is Synaptic vesicle membrane protein VAT-1 homolog (Vat1).